Here is a 195-residue protein sequence, read N- to C-terminus: Peroxiredoxin bcp1 (195 aa).

In terms of domain architecture, Thioredoxin spans 46–168 (IQVGDVIPDI…SHWIFEKGTG (123 aa)). C89 (cysteine sulfenic acid (-SOH) intermediate) is an active-site residue. The cysteines at positions 89 and 94 are disulfide-linked.

This sequence belongs to the peroxiredoxin family. BCP/PrxQ subfamily. As to quaternary structure, monomer. The active site is a conserved redox-active cysteine residue, the peroxidatic cysteine (C(P)), which makes the nucleophilic attack on the peroxide substrate. The peroxide oxidizes the C(P)-SH to cysteine sulfenic acid (C(P)-SOH), which then reacts with another cysteine residue, the resolving cysteine (C(R)), to form a disulfide bridge. The disulfide is subsequently reduced by an appropriate electron donor to complete the catalytic cycle. In this atypical 2-Cys peroxiredoxin, C(R) is present in the same subunit to form an intramolecular disulfide. The disulfide is subsequently reduced by thioredoxin.

The protein resides in the cytoplasm. The protein localises to the nucleus. The catalysed reaction is a hydroperoxide + [thioredoxin]-dithiol = an alcohol + [thioredoxin]-disulfide + H2O. Thiol-specific peroxidase that catalyzes the reduction of hydrogen peroxide and organic hydroperoxides to water and alcohols, respectively. Plays a role in cell protection against oxidative stress by detoxifying peroxides and as sensor of hydrogen peroxide-mediated signaling events. Acts as a scavenger of H(2)O(2). This Schizosaccharomyces pombe (strain 972 / ATCC 24843) (Fission yeast) protein is Peroxiredoxin bcp1 (bcp1).